Reading from the N-terminus, the 261-residue chain is uncharacterized protein (261 aa).

The segment at 1 to 22 is disordered; sequence MAETTEPPSDAGTSQADAMALA. The chain crosses the membrane as a helical span at residues 107–127; that stretch reads IAMAAAVVIICGFTGLSGYIV.

To M.tuberculosis Rv1362c.

Its subcellular location is the membrane. This is an uncharacterized protein from Mycobacterium tuberculosis (strain ATCC 25618 / H37Rv).